Here is a 284-residue protein sequence, read N- to C-terminus: Acetylglutamate kinase (284 aa).

Residues 66–67, R88, and N179 contribute to the substrate site; that span reads GG.

The protein belongs to the acetylglutamate kinase family. ArgB subfamily.

Its subcellular location is the cytoplasm. It catalyses the reaction N-acetyl-L-glutamate + ATP = N-acetyl-L-glutamyl 5-phosphate + ADP. The protein operates within amino-acid biosynthesis; L-arginine biosynthesis; N(2)-acetyl-L-ornithine from L-glutamate: step 2/4. In terms of biological role, catalyzes the ATP-dependent phosphorylation of N-acetyl-L-glutamate. The chain is Acetylglutamate kinase from Actinobacillus pleuropneumoniae serotype 7 (strain AP76).